The following is a 1080-amino-acid chain: DNA polymerase II large subunit (1080 aa).

The protein belongs to the archaeal DNA polymerase II family. As to quaternary structure, heterodimer of a large subunit and a small subunit.

The enzyme catalyses DNA(n) + a 2'-deoxyribonucleoside 5'-triphosphate = DNA(n+1) + diphosphate. It carries out the reaction Exonucleolytic cleavage in the 3'- to 5'-direction to yield nucleoside 5'-phosphates.. Functionally, possesses two activities: a DNA synthesis (polymerase) and an exonucleolytic activity that degrades single-stranded DNA in the 3'- to 5'-direction. Has a template-primer preference which is characteristic of a replicative DNA polymerase. This Picrophilus torridus (strain ATCC 700027 / DSM 9790 / JCM 10055 / NBRC 100828 / KAW 2/3) protein is DNA polymerase II large subunit.